We begin with the raw amino-acid sequence, 496 residues long: Cytochrome c-552 (496 aa).

Positions M1–A23 are cleaved as a signal peptide. Position 100 (H100) interacts with heme c. Positions 128, 131, and 132 each coordinate heme. Residues C166, C169, H170, C210, C213, and H214 each coordinate heme c. E216, Y217, K269, and Q271 together coordinate Ca(2+). Y217 contributes to the substrate binding site. Position 272 (H272) interacts with substrate. Residues H283, C290, C293, H294, H308, C321, C324, H325, and H400 each contribute to the heme c site.

This sequence belongs to the cytochrome c-552 family. Requires Ca(2+) as cofactor. Heme c is required as a cofactor.

It is found in the periplasm. It catalyses the reaction 6 Fe(III)-[cytochrome c] + NH4(+) + 2 H2O = 6 Fe(II)-[cytochrome c] + nitrite + 8 H(+). Its pathway is nitrogen metabolism; nitrate reduction (assimilation). Catalyzes the reduction of nitrite to ammonia, consuming six electrons in the process. This Aliarcobacter butzleri (strain RM4018) (Arcobacter butzleri) protein is Cytochrome c-552.